The sequence spans 413 residues: Glucose-1-phosphate adenylyltransferase (413 aa).

Alpha-D-glucose 1-phosphate-binding positions include Gly-163, 179–180 (EK), and Ser-197.

This sequence belongs to the bacterial/plant glucose-1-phosphate adenylyltransferase family. As to quaternary structure, homotetramer.

It carries out the reaction alpha-D-glucose 1-phosphate + ATP + H(+) = ADP-alpha-D-glucose + diphosphate. The protein operates within glycan biosynthesis; glycogen biosynthesis. Its function is as follows. Involved in the biosynthesis of ADP-glucose, a building block required for the elongation reactions to produce glycogen. Catalyzes the reaction between ATP and alpha-D-glucose 1-phosphate (G1P) to produce pyrophosphate and ADP-Glc. The polypeptide is Glucose-1-phosphate adenylyltransferase (Parafrankia sp. (strain EAN1pec)).